A 1840-amino-acid polypeptide reads, in one-letter code: Sodium channel protein type 4 subunit alpha (1840 aa).

Topologically, residues 1–131 (MASSSLPNLV…RVAIKVLIHA (131 aa)) are cytoplasmic. Basic and acidic residues predominate over residues 36 to 60 (EARLQRNKQMEIEEPERKPRSDLEA). The segment at 36–63 (EARLQRNKQMEIEEPERKPRSDLEAGKN) is disordered. An I repeat occupies 113–448 (LLSPFSIVRR…VVAMAYAEQN (336 aa)). A helical membrane pass occupies residues 132–150 (LFSMFIMITILTNCVFMTM). Residues 151–157 (SNPPSWS) are Extracellular-facing. A helical transmembrane segment spans residues 158–178 (KHVEYTFTGIYTFESLIKMLA). At 179–192 (RGFCIDDFTFLRDP) the chain is on the cytoplasmic side. Residues 193 to 210 (WNWLDFSVITMAYVTEFV) form a helical membrane-spanning segment. At 211–216 (DLGNIS) the chain is on the extracellular side. Residues 217 to 233 (ALRTFRVLRALKTITVI) traverse the membrane as a helical segment. Topologically, residues 234-252 (PGLKTIVGALIQSVKKLSD) are cytoplasmic. A helical membrane pass occupies residues 253-272 (VMILTVFCLSVFALVGLQLF). Over 273–385 (MGNLRQKCVR…PNYGYTSYDT (113 aa)) the chain is Extracellular. Residues Cys280 and Cys354 are joined by a disulfide bond. Residues Asn288, Asn291, Asn297, Asn303, Asn309, Asn315, Asn327, and Asn356 are each glycosylated (N-linked (GlcNAc...) asparagine). Cysteines 363 and 369 form a disulfide. Positions 386-410 (FSWAFLALFRLMTQDYWENLFQLTL) form an intramembrane region, pore-forming. Residues 411–417 (RAAGKTY) lie on the Extracellular side of the membrane. Residues 418-438 (MIFFVVIIFLGSFYLINLILA) traverse the membrane as a helical segment. Topologically, residues 439–572 (VVAMAYAEQN…HIIYLIVMDP (134 aa)) are cytoplasmic. Residues 481–522 (AAQALESGEEADGDPTHNKDCNGSLDASGEKGPPRPSCSADS) are disordered. Ser487 bears the Phosphoserine mark. The stretch at 554–826 (CCAPWVKFKH…QIAIGRIKWG (273 aa)) is one II repeat. Residues 573–591 (FVDLGITICIVLNTLFMAM) form a helical membrane-spanning segment. At 592-602 (EHYPMTEHFDN) the chain is on the extracellular side. Residues 603–622 (VLSVGNLVFTGIFTAEMVLK) traverse the membrane as a helical segment. Residues 623–636 (LIAMDPYEYFQQGW) lie on the Cytoplasmic side of the membrane. A helical transmembrane segment spans residues 637–656 (NIFDSFIVTLSLVELGLANV). Topologically, residues 657–658 (QG) are extracellular. Residues 659–676 (LSVLRSFRLLRVFKLAKS) form a helical membrane-spanning segment. The Cytoplasmic segment spans residues 677 to 692 (WPTLNMLIKIIGNSVG). A helical transmembrane segment spans residues 693–711 (ALGNLTLVLAIIVFIFAVV). Residues 712–740 (GMQLFGKSYKECVCKIASDCNLPRWHMND) are Extracellular-facing. The cysteines at positions 725 and 731 are disulfide-linked. Positions 741-761 (FFHSFLIVFRILCGEWIETMW) form an intramembrane region, pore-forming. The Extracellular portion of the chain corresponds to 762-772 (DCMEVAGQAMC). An intrachain disulfide couples Cys763 to Cys772. The chain crosses the membrane as a helical span at residues 773-791 (LTVFLMVMVIGNLVVLNLF). Residues 792 to 1025 (LALLLSSFSA…ACFKIVEHNW (234 aa)) lie on the Cytoplasmic side of the membrane. 2 disordered regions span residues 854–884 (EPGG…LKDN) and 925–983 (DLEM…GEQP). Residues 868–884 (EDEKKEPPPEDKELKDN) show a composition bias toward basic and acidic residues. Composition is skewed to acidic residues over residues 925–940 (DLEM…FSEP) and 968–983 (EDPE…GEQP). One copy of the III repeat lies at 1006 to 1319 (RGKMWWTLRR…KKYYNAMKKL (314 aa)). Residues 1026 to 1043 (FETFIVFMILLSSGALAF) traverse the membrane as a helical segment. The Extracellular portion of the chain corresponds to 1044–1056 (EDIYIEQRRVIRT). A helical transmembrane segment spans residues 1057–1075 (ILEYADKVFTYIFILEMLL). Residues 1076–1089 (KWVAYGFKVYFTNA) lie on the Cytoplasmic side of the membrane. Residues 1090–1108 (WCWLDFLIVDVSIISLVAN) traverse the membrane as a helical segment. The Extracellular segment spans residues 1109–1116 (WLGYSELG). Residues 1117 to 1135 (PIKSLRTLRALRPLRALSR) form a helical membrane-spanning segment. Residues 1136–1152 (FEGMRVVVNALLGAIPS) are Cytoplasmic-facing. The chain crosses the membrane as a helical span at residues 1153–1172 (IMNVLLVCLIFWLIFSIMGV). At 1173 to 1223 (NLFAGKFYYCVNTTTSERFDISVVNNKSESESLMYTGQVRWMNVKVNYDNV) the chain is on the extracellular side. The N-linked (GlcNAc...) asparagine glycan is linked to Asn1198. Residues 1224-1245 (GLGYLSLLQVATFKGWMDIMYA) constitute an intramembrane region (pore-forming). Residues 1246-1262 (AVDSREKEEQPHYEVNL) lie on the Extracellular side of the membrane. The helical transmembrane segment at 1263 to 1284 (YMYLYFVIFIIFGSFFTLNLFI) threads the bilayer. Residues 1285–1347 (GVIIDNFNQQ…MVYDFVTKQV (63 aa)) are Cytoplasmic-facing. Residues 1303-1305 (IFM) form an important for rapid channel inactivation region. An IV repeat occupies 1328-1626 (IPRPQNKIQG…WEKFDPDATQ (299 aa)). Residues 1348–1365 (FDISIMILICLNMVTMMV) traverse the membrane as a helical segment. At 1366 to 1376 (ETDDQSQLKVD) the chain is on the extracellular side. A helical membrane pass occupies residues 1377–1395 (ILYNINMVFIIIFTGECVL). Topologically, residues 1396–1407 (KMFALRHYYFTI) are cytoplasmic. Residues 1408–1425 (GWNIFDFVVVILSIVGLA) traverse the membrane as a helical segment. Topologically, residues 1426 to 1438 (LSDLIQKYFVSPT) are extracellular. A helical membrane pass occupies residues 1439-1455 (LFRVIRLARIGRVLRLI). The Cytoplasmic portion of the chain corresponds to 1456 to 1474 (RGAKGIRTLLFALMMSLPA). A helical membrane pass occupies residues 1475-1492 (LFNIGLLLFLVMFIYSIF). Topologically, residues 1493-1514 (GMSNFAYVKKESGIDDMFNFET) are extracellular. The pore-forming intramembrane region spans 1515 to 1537 (FGNSIICLFEITTSAGWDGLLNP). The Extracellular portion of the chain corresponds to 1538 to 1567 (ILNSGPPDCDPTLENPGTNVRGDCGNPSIG). Cys1546 and Cys1561 are disulfide-bonded. A helical transmembrane segment spans residues 1568 to 1590 (ICFFCSYIIISFLIVVNMYIAII). The Cytoplasmic portion of the chain corresponds to 1591–1840 (LENFNVATEE…VRPGVKESLV (250 aa)). Residues 1720–1749 (EEVCAIKIQRAYRRHLLQRSVKQASYMYRH) enclose the IQ domain. Positions 1775–1840 (HEKEGDGVQS…VRPGVKESLV (66 aa)) are disordered. Low complexity predominate over residues 1804-1813 (PTSSSDTALT). Residues 1814–1824 (PSPPPLPPSSS) show a composition bias toward pro residues.

This sequence belongs to the sodium channel (TC 1.A.1.10) family. Nav1.4/SCN4A subfamily. The Nav1.4 voltage-gated sodium channel consists of an ion-conducting alpha subunit SCN4A which is functional on its own and a regulatory beta subunit SCN1B. SCN1B strongly enhances the presence of SCN4A at the cell surface. SCN1B is also required for rapid channel inactivation and recovery after inactivation. It prevents the decrease of channel activity in response to repetitive, high-frequency depolarizations. Interacts with the syntrophins SNTA1, SNTB1 and SNTB2 (via PDZ domain); probably links SCN4A to the actin cytoskeleton and the extracellular matrix via the dystrophin-associated protein complex and regulates its localization in muscle cells. Interacts with TMEM233; probable regulator of the channel. In terms of tissue distribution, detected in skeletal muscle.

Its subcellular location is the cell membrane. It catalyses the reaction Na(+)(in) = Na(+)(out). Its activity is regulated as follows. Potently inhibited by tetrodotoxin and saxitoxin. Inhibited by the conotoxin GVIIJ. Functionally, pore-forming subunit of Nav1.4, a voltage-gated sodium (Nav) channel that directly mediates the depolarizing phase of action potentials in excitable membranes. Navs, also called VGSCs (voltage-gated sodium channels) or VDSCs (voltage-dependent sodium channels), operate by switching between closed and open conformations depending on the voltage difference across the membrane. In the open conformation they allow Na(+) ions to selectively pass through the pore, along their electrochemical gradient. The influx of Na+ ions provokes membrane depolarization, initiating the propagation of electrical signals throughout cells and tissues. Highly expressed in skeletal muscles, Nav1.4 generates the action potential crucial for muscle contraction. This Rattus norvegicus (Rat) protein is Sodium channel protein type 4 subunit alpha.